Here is a 178-residue protein sequence, read N- to C-terminus: Acireductone dioxygenase (178 aa).

Fe(2+)-binding residues include histidine 100, histidine 102, glutamate 106, and histidine 145. Ni(2+)-binding residues include histidine 100, histidine 102, glutamate 106, and histidine 145.

The protein belongs to the acireductone dioxygenase (ARD) family. Monomer. Requires Fe(2+) as cofactor. The cofactor is Ni(2+).

The catalysed reaction is 1,2-dihydroxy-5-(methylsulfanyl)pent-1-en-3-one + O2 = 3-(methylsulfanyl)propanoate + CO + formate + 2 H(+). The enzyme catalyses 1,2-dihydroxy-5-(methylsulfanyl)pent-1-en-3-one + O2 = 4-methylsulfanyl-2-oxobutanoate + formate + 2 H(+). The protein operates within amino-acid biosynthesis; L-methionine biosynthesis via salvage pathway; L-methionine from S-methyl-5-thio-alpha-D-ribose 1-phosphate: step 5/6. In terms of biological role, catalyzes 2 different reactions between oxygen and the acireductone 1,2-dihydroxy-3-keto-5-methylthiopentene (DHK-MTPene) depending upon the metal bound in the active site. Fe-containing acireductone dioxygenase (Fe-ARD) produces formate and 2-keto-4-methylthiobutyrate (KMTB), the alpha-ketoacid precursor of methionine in the methionine recycle pathway. Ni-containing acireductone dioxygenase (Ni-ARD) produces methylthiopropionate, carbon monoxide and formate, and does not lie on the methionine recycle pathway. The sequence is that of Acireductone dioxygenase from Bacillus velezensis (strain DSM 23117 / BGSC 10A6 / LMG 26770 / FZB42) (Bacillus amyloliquefaciens subsp. plantarum).